The primary structure comprises 369 residues: MSARILEDSPNARINKTILDRYLSLPLQENIVQATYVWIDGTGEDLRCKDRTLDFIPQSPKELPVWNYDGSSCYQAEGSNSDTYLYPVAIYKDPFRRGNNILVMCDTYKFDGTPTDTNKRKTCLEVANKCAAEEPWFGIEQEYTFLDFDGHPLGWPKNGFPGPQGPYYCGVGANKVYARDIVDAHYRACLYAGIKVSGTNAEVMPAQWEFQVGPCEGISIGDDLWMARFLLHRISEEFGIVSTLDPKPMPGDWNGAGAHTNVSTKAMREDGGIRDIEKAVAKLSKCHERHIRAYDPKQGQDNARRLTGKHETSSINDFSAGVANRGCSIRIPRGVNDDGKGYFEDRRPSSNCDPYSVVEAILRTICLDE.

A GS beta-grasp domain is found at 32-112; sequence VQATYVWIDG…VMCDTYKFDG (81 aa). The region spanning 119–369 is the GS catalytic domain; it reads KRKTCLEVAN…AILRTICLDE (251 aa).

Belongs to the glutamine synthetase family. As to quaternary structure, homooctamer.

It localises to the cytoplasm. It catalyses the reaction L-glutamate + NH4(+) + ATP = L-glutamine + ADP + phosphate + H(+). The sequence is that of Glutamine synthetase 2 cytoplasmic (Gs2) from Drosophila melanogaster (Fruit fly).